We begin with the raw amino-acid sequence, 353 residues long: Thiamine-phosphate synthase (353 aa).

Residues 1 to 128 (MKSMPVAPIA…AASAAAIRYG (128 aa)) are unknown. The interval 129–353 (LYDLEVTVLQ…TSLQLLEALR (225 aa)) is thiamine-phosphate synthase. 4-amino-2-methyl-5-(diphosphooxymethyl)pyrimidine is bound by residues 185–189 (QYRNK) and N217. Residues D218 and D237 each contribute to the Mg(2+) site. S256 contacts 4-amino-2-methyl-5-(diphosphooxymethyl)pyrimidine. 282-284 (TAT) provides a ligand contact to 2-[(2R,5Z)-2-carboxy-4-methylthiazol-5(2H)-ylidene]ethyl phosphate. K285 serves as a coordination point for 4-amino-2-methyl-5-(diphosphooxymethyl)pyrimidine. G312 lines the 2-[(2R,5Z)-2-carboxy-4-methylthiazol-5(2H)-ylidene]ethyl phosphate pocket.

The protein belongs to the thiamine-phosphate synthase family. Requires Mg(2+) as cofactor.

The enzyme catalyses 2-[(2R,5Z)-2-carboxy-4-methylthiazol-5(2H)-ylidene]ethyl phosphate + 4-amino-2-methyl-5-(diphosphooxymethyl)pyrimidine + 2 H(+) = thiamine phosphate + CO2 + diphosphate. It carries out the reaction 2-(2-carboxy-4-methylthiazol-5-yl)ethyl phosphate + 4-amino-2-methyl-5-(diphosphooxymethyl)pyrimidine + 2 H(+) = thiamine phosphate + CO2 + diphosphate. The catalysed reaction is 4-methyl-5-(2-phosphooxyethyl)-thiazole + 4-amino-2-methyl-5-(diphosphooxymethyl)pyrimidine + H(+) = thiamine phosphate + diphosphate. Its pathway is cofactor biosynthesis; thiamine diphosphate biosynthesis; thiamine phosphate from 4-amino-2-methyl-5-diphosphomethylpyrimidine and 4-methyl-5-(2-phosphoethyl)-thiazole: step 1/1. Condenses 4-methyl-5-(beta-hydroxyethyl)thiazole monophosphate (THZ-P) and 2-methyl-4-amino-5-hydroxymethyl pyrimidine pyrophosphate (HMP-PP) to form thiamine monophosphate (TMP). The sequence is that of Thiamine-phosphate synthase from Prochlorococcus marinus (strain MIT 9303).